The sequence spans 188 residues: Pyridoxal 5'-phosphate synthase subunit PdxT (188 aa).

Position 46–48 (46–48) interacts with L-glutamine; that stretch reads GES. The active-site Nucleophile is Cys-78. L-glutamine-binding positions include Arg-105 and 134–135; that span reads IR. Catalysis depends on charge relay system residues His-170 and Glu-172.

Belongs to the glutaminase PdxT/SNO family. As to quaternary structure, in the presence of PdxS, forms a dodecamer of heterodimers. Only shows activity in the heterodimer.

The catalysed reaction is aldehydo-D-ribose 5-phosphate + D-glyceraldehyde 3-phosphate + L-glutamine = pyridoxal 5'-phosphate + L-glutamate + phosphate + 3 H2O + H(+). It catalyses the reaction L-glutamine + H2O = L-glutamate + NH4(+). Its pathway is cofactor biosynthesis; pyridoxal 5'-phosphate biosynthesis. Its function is as follows. Catalyzes the hydrolysis of glutamine to glutamate and ammonia as part of the biosynthesis of pyridoxal 5'-phosphate. The resulting ammonia molecule is channeled to the active site of PdxS. This is Pyridoxal 5'-phosphate synthase subunit PdxT from Moorella thermoacetica (strain ATCC 39073 / JCM 9320).